The sequence spans 213 residues: Kynurenine formamidase (213 aa).

Position 18 (Trp18) interacts with substrate. Residues His48, His52, and Asp54 each coordinate Zn(2+). His58 serves as the catalytic Proton donor/acceptor. Residues His160 and Glu172 each coordinate Zn(2+).

It belongs to the Cyclase 1 superfamily. KynB family. As to quaternary structure, homodimer. Requires Zn(2+) as cofactor.

The enzyme catalyses N-formyl-L-kynurenine + H2O = L-kynurenine + formate + H(+). It participates in amino-acid degradation; L-tryptophan degradation via kynurenine pathway; L-kynurenine from L-tryptophan: step 2/2. Its function is as follows. Catalyzes the hydrolysis of N-formyl-L-kynurenine to L-kynurenine, the second step in the kynurenine pathway of tryptophan degradation. The chain is Kynurenine formamidase from Burkholderia ambifaria (strain ATCC BAA-244 / DSM 16087 / CCUG 44356 / LMG 19182 / AMMD) (Burkholderia cepacia (strain AMMD)).